Reading from the N-terminus, the 34-residue chain is Unknown protein 5 (34 aa).

The protein is Unknown protein 5 of Pseudotsuga menziesii (Douglas-fir).